The sequence spans 166 residues: Salivary acidic proline-rich phosphoprotein 1/2 (166 aa).

An N-terminal signal peptide occupies residues 1-16; it reads MLLILLSVALLAFSSA. A disordered region spans residues 16–166; that stretch reads AQDLDEDVSQ…QGPPQGQSPQ (151 aa). The residue at position 17 (glutamine 17) is a Pyrrolidone carboxylic acid. The inhibits hydroxyapatite formation, binds to hydroxyapatite and calcium stretch occupies residues 17 to 46; sequence QDLDEDVSQEDVPLVISDGGDSEQFIDEER. Position 24 is a phosphoserine; by FAM20C (serine 24). Serine 33 carries the phosphoserine; alternate modification. O-linked (GlcA) serine; alternate glycans are attached at residues serine 33 and serine 38. Serine 38 is modified (phosphoserine; by FAM20C; alternate). Low complexity-rich tracts occupy residues 48-61 and 68-82; these read GPPLGGQQSQPSAG and GPQQGPPQQGGQQQQ. Pro residues-rich tracts occupy residues 83–111 and 137–159; these read GPPPPQGKPQGPPQQGGHPPPPQGRPQGP and GPPPPPPGKPQGPPPQGGRPQGP.

Post-translationally, proteolytically cleaved; PRP-2, PRP-1, PIF-S and Db-S yield PRP-4, PRP-3 (protein A), PIF-F and Db-F, respectively. A hexuronic acid was shown to be linked to Ser-33 in about 40% of the polypeptides. Neither the structure of the carbohydrate (whether glucuronic acid or an isomer of), nor the linkage (whether a glycoside or an ester) has been definitely established.

It localises to the secreted. In terms of biological role, PRP's act as highly potent inhibitors of crystal growth of calcium phosphates. They provide a protective and reparative environment for dental enamel which is important for the integrity of the teeth. The protein is Salivary acidic proline-rich phosphoprotein 1/2 (PRH1) of Homo sapiens (Human).